The chain runs to 345 residues: 3-dehydroquinate synthase (345 aa).

NAD(+) contacts are provided by residues 86-90, 110-111, K123, and K132; these read GALLD and TT. Residues E165, H229, and H243 each coordinate Zn(2+).

Belongs to the sugar phosphate cyclases superfamily. Dehydroquinate synthase family. The cofactor is NAD(+). Co(2+) serves as cofactor. Zn(2+) is required as a cofactor.

It is found in the cytoplasm. It catalyses the reaction 7-phospho-2-dehydro-3-deoxy-D-arabino-heptonate = 3-dehydroquinate + phosphate. It participates in metabolic intermediate biosynthesis; chorismate biosynthesis; chorismate from D-erythrose 4-phosphate and phosphoenolpyruvate: step 2/7. Catalyzes the conversion of 3-deoxy-D-arabino-heptulosonate 7-phosphate (DAHP) to dehydroquinate (DHQ). The protein is 3-dehydroquinate synthase of Pyrobaculum aerophilum (strain ATCC 51768 / DSM 7523 / JCM 9630 / CIP 104966 / NBRC 100827 / IM2).